The chain runs to 220 residues: Deoxyribose-phosphate aldolase (220 aa).

Asp-89 acts as the Proton donor/acceptor in catalysis. Lys-151 serves as the catalytic Schiff-base intermediate with acetaldehyde. The active-site Proton donor/acceptor is the Lys-180.

This sequence belongs to the DeoC/FbaB aldolase family. DeoC type 1 subfamily.

It is found in the cytoplasm. The enzyme catalyses 2-deoxy-D-ribose 5-phosphate = D-glyceraldehyde 3-phosphate + acetaldehyde. Its pathway is carbohydrate degradation; 2-deoxy-D-ribose 1-phosphate degradation; D-glyceraldehyde 3-phosphate and acetaldehyde from 2-deoxy-alpha-D-ribose 1-phosphate: step 2/2. Its function is as follows. Catalyzes a reversible aldol reaction between acetaldehyde and D-glyceraldehyde 3-phosphate to generate 2-deoxy-D-ribose 5-phosphate. In Streptococcus suis (strain 98HAH33), this protein is Deoxyribose-phosphate aldolase.